Here is a 126-residue protein sequence, read N- to C-terminus: Small ribosomal subunit protein uS13 (126 aa).

Residues 95-126 form a disordered region; that stretch reads GLPVRGQQTRTNARTRKGKRKTVGGTKKAKAK. The segment covering 107 to 126 has biased composition (basic residues); it reads ARTRKGKRKTVGGTKKAKAK.

This sequence belongs to the universal ribosomal protein uS13 family. Part of the 30S ribosomal subunit. Forms a loose heterodimer with protein S19. Forms two bridges to the 50S subunit in the 70S ribosome.

Located at the top of the head of the 30S subunit, it contacts several helices of the 16S rRNA. In the 70S ribosome it contacts the 23S rRNA (bridge B1a) and protein L5 of the 50S subunit (bridge B1b), connecting the 2 subunits; these bridges are implicated in subunit movement. Contacts the tRNAs in the A and P-sites. The protein is Small ribosomal subunit protein uS13 of Aquifex aeolicus (strain VF5).